A 311-amino-acid chain; its full sequence is Aspartate carbamoyltransferase catalytic subunit (311 aa).

2 residues coordinate carbamoyl phosphate: arginine 55 and threonine 56. Residue lysine 85 coordinates L-aspartate. Residues arginine 106, histidine 135, and glutamine 138 each coordinate carbamoyl phosphate. Residues arginine 168 and arginine 230 each coordinate L-aspartate. Carbamoyl phosphate contacts are provided by leucine 268 and proline 269.

This sequence belongs to the aspartate/ornithine carbamoyltransferase superfamily. ATCase family. Heterododecamer (2C3:3R2) of six catalytic PyrB chains organized as two trimers (C3), and six regulatory PyrI chains organized as three dimers (R2).

The enzyme catalyses carbamoyl phosphate + L-aspartate = N-carbamoyl-L-aspartate + phosphate + H(+). Its pathway is pyrimidine metabolism; UMP biosynthesis via de novo pathway; (S)-dihydroorotate from bicarbonate: step 2/3. Functionally, catalyzes the condensation of carbamoyl phosphate and aspartate to form carbamoyl aspartate and inorganic phosphate, the committed step in the de novo pyrimidine nucleotide biosynthesis pathway. The chain is Aspartate carbamoyltransferase catalytic subunit from Cronobacter sakazakii (strain ATCC BAA-894) (Enterobacter sakazakii).